The primary structure comprises 328 residues: Malate dehydrogenase (328 aa).

11 to 17 serves as a coordination point for NAD(+); sequence GAAGQIG. Substrate-binding residues include Arg94 and Arg100. NAD(+) contacts are provided by residues Asn107, Gln114, and 131–133; that span reads VGN. The substrate site is built by Asn133 and Arg164. The active-site Proton acceptor is His189.

The protein belongs to the LDH/MDH superfamily. MDH type 2 family.

It carries out the reaction (S)-malate + NAD(+) = oxaloacetate + NADH + H(+). Its function is as follows. Catalyzes the reversible oxidation of malate to oxaloacetate. This chain is Malate dehydrogenase, found in Xanthomonas euvesicatoria pv. vesicatoria (strain 85-10) (Xanthomonas campestris pv. vesicatoria).